The following is a 166-amino-acid chain: MKYTSYFLALLLCGLLGFSGSYGQGQFFREIENLKEYFNASSPDVAKGGPLFSEILKNWKDESDKKIIQSQIVSFYFKLFENLKDNQVIQRSMDIIKQDMFQKFLNGSSEKLEDFKKLIQIPVDDLQIQRKAINELIKVMNDLSPKSNLRKRKRSQNLFRGRRASM.

Residues 1 to 23 form the signal peptide; it reads MKYTSYFLALLLCGLLGFSGSYG. Pyrrolidone carboxylic acid is present on Gln-24. 2 N-linked (GlcNAc...) asparagine glycosylation sites follow: Asn-39 and Asn-106.

This sequence belongs to the type II (or gamma) interferon family. As to quaternary structure, homodimer. Interacts with IFNGR1 (via extracellular domain); this interaction promotes IFNGR1 dimerization. As to expression, released primarily from activated T lymphocytes.

The protein resides in the secreted. In terms of biological role, type II interferon produced by immune cells such as T-cells and NK cells that plays crucial roles in antimicrobial, antiviral, and antitumor responses by activating effector immune cells and enhancing antigen presentation. Primarily signals through the JAK-STAT pathway after interaction with its receptor IFNGR1 to affect gene regulation. Upon IFNG binding, IFNGR1 intracellular domain opens out to allow association of downstream signaling components JAK2, JAK1 and STAT1, leading to STAT1 activation, nuclear translocation and transcription of IFNG-regulated genes. Many of the induced genes are transcription factors such as IRF1 that are able to further drive regulation of a next wave of transcription. Plays a role in class I antigen presentation pathway by inducing a replacement of catalytic proteasome subunits with immunoproteasome subunits. In turn, increases the quantity, quality, and repertoire of peptides for class I MHC loading. Increases the efficiency of peptide generation also by inducing the expression of activator PA28 that associates with the proteasome and alters its proteolytic cleavage preference. Up-regulates as well MHC II complexes on the cell surface by promoting expression of several key molecules such as cathepsins B/CTSB, H/CTSH, and L/CTSL. Participates in the regulation of hematopoietic stem cells during development and under homeostatic conditions by affecting their development, quiescence, and differentiation. The chain is Interferon gamma (IFNG) from Bos taurus (Bovine).